The primary structure comprises 514 residues: MTLIWRHLLRPLCLVTPAPRILEMRPFLNLGASWTSVTKLSLHTKPRMPPCDFMPERYQSLGYNRVLEIHKEHLSPVVTAYFQKPLLLHQGHMEWLFDAEGNRYLDFFSGIVTVSVGHCHPKVNAVAQKQLGRLWHTSTVFFHPPMHEYAEKLAALLPEPLKVIFLVNSGSEANELAMLMARAHSNNIDIISFRGAYHGCSPYTLGLTNIGTYKMELPGGTGCQPTMCPDVFRGPWGGSHCRDSPVQTIRKCSCAPDCCQAKDQYIEQFKDTLSTSVAKSIAGFFAEPIQGVNGVVQYPKGFLKEAFELVRARGGVCIADEVQTGFGRLGSHFRGFQTHDVLPDIVTMAKGIGNGFPMAAVVTTPEIAKSLVKRLQHFNTFGGNPMACAIGSAVLEVIKEENLQENSQEVGTYMLLQFAKLRDEFEIVGDVRGKGLMIGIEMVQDKISRRPLPREEVNQIHEDCKHMGLLVGRGSIFSQTFRIAPSMCITKPEVDFAVEVFRSALTQHMERRAK.

A mitochondrion-targeting transit peptide spans 1 to 41 (MTLIWRHLLRPLCLVTPAPRILEMRPFLNLGASWTSVTKLS). An N6-acetyllysine; alternate modification is found at K71. Residue K71 is modified to N6-succinyllysine; alternate. Position 84 is an N6-acetyllysine (K84). K262 bears the N6-acetyllysine; alternate mark. K262 is modified (N6-succinyllysine; alternate). K304 carries the post-translational modification N6-succinyllysine. K350 carries the post-translational modification N6-(pyridoxal phosphate)lysine. Residue K420 is modified to N6-acetyllysine; alternate. K420 is subject to N6-succinyllysine; alternate.

It belongs to the class-III pyridoxal-phosphate-dependent aminotransferase family. As to quaternary structure, homotetramer. The cofactor is pyridoxal 5'-phosphate.

Its subcellular location is the mitochondrion. The catalysed reaction is glyoxylate + L-alanine = glycine + pyruvate. It catalyses the reaction (R)-3-amino-2-methylpropanoate + pyruvate = 2-methyl-3-oxopropanoate + L-alanine. It carries out the reaction 3-oxopropanoate + L-alanine = beta-alanine + pyruvate. The enzyme catalyses 2-oxobutanoate + L-alanine = (2S)-2-aminobutanoate + pyruvate. The catalysed reaction is N(omega),N(omega)-dimethyl-L-arginine + pyruvate = 5-(3,3-dimethylguanidino)-2-oxopentanoate + L-alanine. It catalyses the reaction N(omega),N('omega)-dimethyl-L-arginine + pyruvate = 5-(3,3'-dimethylguanidino)-2-oxopentanoate + L-alanine. It carries out the reaction N(omega),N(omega)-dimethyl-L-arginine + glyoxylate = 5-(3,3-dimethylguanidino)-2-oxopentanoate + glycine. The enzyme catalyses N(omega),N('omega)-dimethyl-L-arginine + glyoxylate = 5-(3,3'-dimethylguanidino)-2-oxopentanoate + glycine. The catalysed reaction is N(omega)-methyl-L-arginine + pyruvate = 5-(3-methylguanidino)-2-oxopentanoate + L-alanine. It catalyses the reaction N(omega)-methyl-L-arginine + glyoxylate = 5-(3-methylguanidino)-2-oxopentanoate + glycine. It carries out the reaction L-ornithine + pyruvate = 5-amino-2-oxopentanoate + L-alanine. The enzyme catalyses L-ornithine + glyoxylate = 5-amino-2-oxopentanoate + glycine. The catalysed reaction is (2S)-2-aminobutanoate + glyoxylate = 2-oxobutanoate + glycine. It catalyses the reaction N(omega),N(omega)-dimethyl-L-arginine + oxaloacetate = 5-(3,3-dimethylguanidino)-2-oxopentanoate + L-aspartate. It carries out the reaction oxaloacetate + L-alanine = L-aspartate + pyruvate. The enzyme catalyses N(omega),N(omega)-dimethyl-L-arginine + 2-oxobutanoate = 5-(3,3-dimethylguanidino)-2-oxopentanoate + (2S)-2-aminobutanoate. The catalysed reaction is 2-oxopentanoate + N(omega),N(omega)-dimethyl-L-arginine = 5-(3,3-dimethylguanidino)-2-oxopentanoate + L-2-aminopentanoate. It catalyses the reaction 2-oxohexanoate + N(omega),N(omega)-dimethyl-L-arginine = L-2-aminohexanoate + 5-(3,3-dimethylguanidino)-2-oxopentanoate. Multifunctional aminotransferase with a broad substrate specificity. Catalyzes the conversion of glyoxylate to glycine using alanine as the amino donor. Catalyzes metabolism of not L- but the D-isomer of D-beta-aminoisobutyric acid to generate 2-methyl-3-oxopropanoate and alanine. Catalyzes the transfer of the amino group from beta-alanine to pyruvate to yield L-alanine and 3-oxopropanoate. Can metabolize NG-monomethyl-L-arginine (NMMA), asymmetric NG,NG-dimethyl-L-arginine (ADMA) and symmetric NG,N'G-dimethyl-L-arginine (SDMA). ADMA is a potent inhibitor of nitric-oxide (NO) synthase, and this activity provides mechanism through which the kidney regulates blood pressure. This is Alanine--glyoxylate aminotransferase 2, mitochondrial (AGXT2) from Pongo abelii (Sumatran orangutan).